Here is a 260-residue protein sequence, read N- to C-terminus: Nuclear shuttle protein (260 aa).

Residues 1–29 (MRRGAYTPRSTPFPRDRRSYNAGKGRSFR) are disordered. The Bipartite nuclear localization signal motif lies at 21–42 (NAGKGRSFRSYRRRGPVRPLAR). Residues 84 to 100 (VKTRALSDNRVGDYIKL) carry the Nuclear localization signal motif. The tract at residues 154-191 (QLFGSINASYADLSIQDPYKDRFTVIRQVSYPVNTEKG) is interaction with Arabidopsis thaliana NSI protein.

Belongs to the begomovirus nuclear shuttle protein family. As to quaternary structure, binds to single-stranded and double-stranded viral DNA. Interacts with the host nuclear shuttle interacting (NSI) protein. This interaction may allow NSP to recruit NSI monomers to the viral genome and thus regulate nuclear export of viral genome by NSP.

It localises to the host nucleus. It is found in the host cytoplasm. The protein resides in the host cell membrane. Binds to the genomic viral ssDNA, shuttles it into and out of the cell nucleus. Begomoviruses use 2 proteins to transport their DNA from cell to cell. The nuclear shuttle protein (NSP) shuttles it between nucleus and cytoplasm and the movement protein (MP) probably transports the DNA-NSP complex to the cell periphery and facilitates movement across the cell wall. In Indian cassava mosaic virus (ICMV), this protein is Nuclear shuttle protein.